The primary structure comprises 326 residues: Eukaryotic translation initiation factor 3 subunit I (326 aa).

WD repeat units follow at residues 8–47 (GHER…RLGT), 50–89 (GHQG…VIAS), 145–184 (MTES…KVVD), 188–227 (DHSA…CLKT), and 285–326 (GHFG…NIFE).

The protein belongs to the eIF-3 subunit I family. As to quaternary structure, component of the eukaryotic translation initiation factor 3 (eIF-3) complex. The eIF-3 complex interacts with pix.

Its subcellular location is the cytoplasm. In terms of biological role, component of the eukaryotic translation initiation factor 3 (eIF-3) complex, which is involved in protein synthesis of a specialized repertoire of mRNAs and, together with other initiation factors, stimulates binding of mRNA and methionyl-tRNAi to the 40S ribosome. The eIF-3 complex specifically targets and initiates translation of a subset of mRNAs involved in cell proliferation. The sequence is that of Eukaryotic translation initiation factor 3 subunit I from Drosophila erecta (Fruit fly).